The sequence spans 586 residues: Mitochondrial tRNA methylthiotransferase CDK5RAP1 (586 aa).

Residues 1 to 30 (MHPLQRVFRAQRLSAPLTSMCWVLLRTFRA) constitute a mitochondrion transit peptide. The disordered stretch occupies residues 68–90 (ASVPQEKPSSPEVEDPPPYLSGD). Positions 97 to 217 (RKVYLETYGC…LPRLLAVVES (121 aa)) constitute an MTTase N-terminal domain. [4Fe-4S] cluster is bound by residues C106, C142, C180, C255, C259, and C262. The Radical SAM core domain maps to 241-495 (SPSATSAFVS…ITVFREEASK (255 aa)). In terms of domain architecture, TRAM spans 498–573 (ATSVGCTQLV…SQTLKGHILC (76 aa)).

This sequence belongs to the methylthiotransferase family. MiaB subfamily. Interacts with CDK5R1 (p35 form). CDK5RAP1, CDK5RAP2 and CDK5RAP3 show competitive binding to CDK5R1. Forms a complex with CDK5R1 and CDK5. The cofactor is [4Fe-4S] cluster. As to expression, expressed in brain.

Its subcellular location is the mitochondrion inner membrane. The enzyme catalyses N(6)-dimethylallyladenosine(37) in tRNA + (sulfur carrier)-SH + AH2 + 2 S-adenosyl-L-methionine = 2-methylsulfanyl-N(6)-dimethylallyladenosine(37) in tRNA + (sulfur carrier)-H + 5'-deoxyadenosine + L-methionine + A + S-adenosyl-L-homocysteine + 2 H(+). Its function is as follows. Methylthiotransferase that catalyzes the conversion of N6-(dimethylallyl)adenosine (i(6)A) to 2-methylthio-N6-(dimethylallyl)adenosine (ms(2)i(6)A) at position 37 (adjacent to the 3'-end of the anticodon) of four mitochondrial DNA-encoded tRNAs (Ser(UCN), Phe, Tyr and Trp). Essential for efficient and highly accurate protein translation by the ribosome. Specifically inhibits CDK5 activation by CDK5R1. Essential for efficient mitochondrial protein synthesis and respiratory chain. In Rattus norvegicus (Rat), this protein is Mitochondrial tRNA methylthiotransferase CDK5RAP1 (Cdk5rap1).